Reading from the N-terminus, the 128-residue chain is Flagellar basal body rod protein FlgB (128 aa).

Belongs to the flagella basal body rod proteins family. The basal body constitutes a major portion of the flagellar organelle and consists of a number of rings mounted on a central rod. In Gram-negative bacteria, at least four rings, L, P, S and M are present, whereas Gram-positive bacteria lack the L and P rings. The rod consists of about 26 subunits of FlgG in the distal portion, and FlgB, FlgC and FlgF build up the proximal portion of the rod with about 6 subunits each. Rod assembly occurs by export via the flagellum-specific pathway of its constituent proteins and by their incorporation into the rod structure in the probable order of FlgB, FlgC, FlgF and FlgG. Another protein, FliE, also assembles onto the stable rod structure.

The protein resides in the bacterial flagellum basal body. Its function is as follows. Structural component of flagellum, the bacterial motility apparatus. Part of the rod structure of flagellar basal body. The chain is Flagellar basal body rod protein FlgB from Cereibacter sphaeroides (Rhodobacter sphaeroides).